A 473-amino-acid polypeptide reads, in one-letter code: Fumarate hydratase class II (473 aa).

Residues 104–106 (SGT), 128–131 (HPND), 138–140 (SSN), and T186 each bind substrate. H187 acts as the Proton donor/acceptor in catalysis. The active site involves S318. Substrate contacts are provided by residues S319 and 324–326 (KVN).

It belongs to the class-II fumarase/aspartase family. Fumarase subfamily. As to quaternary structure, homotetramer.

It is found in the cytoplasm. The catalysed reaction is (S)-malate = fumarate + H2O. It participates in carbohydrate metabolism; tricarboxylic acid cycle; (S)-malate from fumarate: step 1/1. Involved in the TCA cycle. Catalyzes the stereospecific interconversion of fumarate to L-malate. The protein is Fumarate hydratase class II of Corynebacterium efficiens (strain DSM 44549 / YS-314 / AJ 12310 / JCM 11189 / NBRC 100395).